A 239-amino-acid chain; its full sequence is Small ribosomal subunit protein uS2 (239 aa).

The protein belongs to the universal ribosomal protein uS2 family.

The protein is Small ribosomal subunit protein uS2 of Synechococcus sp. (strain CC9902).